The following is a 591-amino-acid chain: Aspartate--tRNA(Asp/Asn) ligase (591 aa).

Glu-174 lines the L-aspartate pocket. Residues 198–201 (QLFK) are aspartate. Arg-220 contributes to the L-aspartate binding site. Residues 220-222 (RDE) and Gln-229 contribute to the ATP site. His-450 is an L-aspartate binding site. Glu-483 contacts ATP. Arg-490 is a binding site for L-aspartate. ATP is bound at residue 535 to 538 (GLDR).

The protein belongs to the class-II aminoacyl-tRNA synthetase family. Type 1 subfamily. In terms of assembly, homodimer.

It localises to the cytoplasm. The catalysed reaction is tRNA(Asx) + L-aspartate + ATP = L-aspartyl-tRNA(Asx) + AMP + diphosphate. Aspartyl-tRNA synthetase with relaxed tRNA specificity since it is able to aspartylate not only its cognate tRNA(Asp) but also tRNA(Asn). Reaction proceeds in two steps: L-aspartate is first activated by ATP to form Asp-AMP and then transferred to the acceptor end of tRNA(Asp/Asn). The sequence is that of Aspartate--tRNA(Asp/Asn) ligase from Pseudomonas syringae pv. syringae (strain B728a).